A 47-amino-acid chain; its full sequence is Protein RL9A (47 aa).

A helical membrane pass occupies residues 27 to 47; it reads CMIIVIMIAISIWILTYVLFL.

Its subcellular location is the host membrane. This Human cytomegalovirus (strain Merlin) (HHV-5) protein is Protein RL9A (RL9A).